A 615-amino-acid polypeptide reads, in one-letter code: Putative lipase ATG15 (615 aa).

Over methionine 1 to arginine 22 the chain is Cytoplasmic. Residues serine 23 to proline 43 traverse the membrane as a helical; Signal-anchor for type II membrane protein segment. The Lumenal portion of the chain corresponds to lysine 44–isoleucine 615. 3 N-linked (GlcNAc...) asparagine glycosylation sites follow: asparagine 253, asparagine 276, and asparagine 360. The Charge relay system role is filled by serine 378. The interval asparagine 520–leucine 559 is disordered. Positions proline 525–proline 536 are enriched in pro residues. A compositionally biased stretch (polar residues) spans threonine 538–leucine 559. Asparagine 551 is a glycosylation site (N-linked (GlcNAc...) asparagine).

Belongs to the AB hydrolase superfamily. Lipase family. In terms of assembly, binds to both phosphatidylinositol (PI) and phosphatidylinositol 3,5-bisphosphate (PIP2).

It is found in the endosome. Its subcellular location is the multivesicular body membrane. The protein resides in the prevacuolar compartment membrane. The enzyme catalyses a triacylglycerol + H2O = a diacylglycerol + a fatty acid + H(+). In terms of biological role, lipase which is essential for lysis of subvacuolar cytoplasm to vacuole targeted bodies and intravacuolar autophagic bodies. Involved in the lysis of intravacuolar multivesicular body (MVB) vesicles. The intravacuolar membrane disintegration by ATG15 is critical to life span extension. In Debaryomyces hansenii (strain ATCC 36239 / CBS 767 / BCRC 21394 / JCM 1990 / NBRC 0083 / IGC 2968) (Yeast), this protein is Putative lipase ATG15 (ATG15).